The sequence spans 308 residues: Putative S-adenosyl-L-methionine-dependent methyltransferase MAB_4585c (308 aa).

Residues Asp131 and 160–161 contribute to the S-adenosyl-L-methionine site; that span reads DL.

Belongs to the UPF0677 family.

Functionally, exhibits S-adenosyl-L-methionine-dependent methyltransferase activity. The protein is Putative S-adenosyl-L-methionine-dependent methyltransferase MAB_4585c of Mycobacteroides abscessus (strain ATCC 19977 / DSM 44196 / CCUG 20993 / CIP 104536 / JCM 13569 / NCTC 13031 / TMC 1543 / L948) (Mycobacterium abscessus).